Consider the following 72-residue polypeptide: Large ribosomal subunit protein bL28 (72 aa).

The protein belongs to the bacterial ribosomal protein bL28 family.

The protein is Large ribosomal subunit protein bL28 of Chlorobium phaeovibrioides (strain DSM 265 / 1930) (Prosthecochloris vibrioformis (strain DSM 265)).